The sequence spans 287 residues: Proteasome subunit alpha (287 aa).

Positions 241–287 (GVVAGEEPHTAAHAPSVPQPGAPAGLGDPGAPDTGGTAGSGGEAPTT) are disordered. Low complexity predominate over residues 262-275 (APAGLGDPGAPDTG). Positions 276–287 (GTAGSGGEAPTT) are enriched in gly residues.

The protein belongs to the peptidase T1A family. In terms of assembly, the 20S proteasome core is composed of 14 alpha and 14 beta subunits that assemble into four stacked heptameric rings, resulting in a barrel-shaped structure. The two inner rings, each composed of seven catalytic beta subunits, are sandwiched by two outer rings, each composed of seven alpha subunits. The catalytic chamber with the active sites is on the inside of the barrel. Has a gated structure, the ends of the cylinder being occluded by the N-termini of the alpha-subunits. Is capped by the proteasome-associated ATPase, ARC.

Its subcellular location is the cytoplasm. It participates in protein degradation; proteasomal Pup-dependent pathway. Its activity is regulated as follows. The formation of the proteasomal ATPase ARC-20S proteasome complex, likely via the docking of the C-termini of ARC into the intersubunit pockets in the alpha-rings, may trigger opening of the gate for substrate entry. Interconversion between the open-gate and close-gate conformations leads to a dynamic regulation of the 20S proteasome proteolysis activity. Component of the proteasome core, a large protease complex with broad specificity involved in protein degradation. This chain is Proteasome subunit alpha, found in Geodermatophilus obscurus (strain ATCC 25078 / DSM 43160 / JCM 3152 / CCUG 61914 / KCC A-0152 / KCTC 9177 / NBRC 13315 / NRRL B-3577 / G-20).